The sequence spans 416 residues: 5-hydroxytryptamine receptor 1A-beta (416 aa).

At 1–35 (MEGTNNTTGWTHFDSTSNRTSKSFDEEVKLSYQVV) the chain is on the extracellular side. 3 N-linked (GlcNAc...) asparagine glycosylation sites follow: Asn5, Asn6, and Asn18. The helical transmembrane segment at 36–56 (TSFLLGALILCSIFGNACVVA) threads the bilayer. At 57–70 (AIALERSLQNVANY) the chain is on the cytoplasmic side. The chain crosses the membrane as a helical span at residues 71-95 (LIGSLAVTDLMVSVLVLPMAALYQV). Over 96–104 (LNRWTLGQI) the chain is Extracellular. The chain crosses the membrane as a helical span at residues 105 to 129 (PCDIFISLDMLCCTSSILHLCVIAL). The cysteines at positions 106 and 189 are disulfide-linked. The serotonin site is built by Asp113 and Cys117. The DRY motif; important for ligand-induced conformation changes signature appears at 130–132 (DRY). Topologically, residues 130–149 (DRYWAITEPIDYMKKRTPRR) are cytoplasmic. Residues 150-171 (AAVLISVTWLVGFSISIPPMLI) form a helical membrane-spanning segment. Over 172 to 195 (MRSQPSSMAEDRANSKQCKITQDP) the chain is Extracellular. Residues 196-218 (WYTIYSTFGAFYIPLTLMLVLYG) form a helical membrane-spanning segment. Over 219 to 340 (RIFKAARFRI…LARERKTVKT (122 aa)) the chain is Cytoplasmic. 1D-myo-inositol 4-phosphate-binding residues include Lys339, Thr340, and Gly346. A helical membrane pass occupies residues 341-364 (LGIIMGTFILCWLPFFIVALVMPF). At 365–372 (CQESCFMP) the chain is on the extracellular side. Residues 373-397 (HWLKDVINWLGYSNSLLNPIIYAYF) traverse the membrane as a helical segment. The short motif at 390–394 (NPIIY) is the NPxxY motif; important for ligand-induced conformation changes and signaling element. Positions 397, 398, and 399 each coordinate 1D-myo-inositol 4-phosphate. Residues 398-416 (NKDFQSAFKKIIKCHFCRA) lie on the Cytoplasmic side of the membrane.

Belongs to the G-protein coupled receptor 1 family. 5-hydroxytryptamine receptor subfamily.

It is found in the cell membrane. Its activity is regulated as follows. G-protein coupled receptor activity is regulated by lipids: phosphatidylinositol 4-phosphate increases HTR1A-mediated activity. Its function is as follows. G-protein coupled receptor for 5-hydroxytryptamine (serotonin). Also functions as a receptor for various drugs and psychoactive substances. Ligand binding causes a conformation change that triggers signaling via guanine nucleotide-binding proteins (G proteins) and modulates the activity of downstream effectors, such as adenylate cyclase. HTR1A is coupled to G(i)/G(o) G alpha proteins and mediates inhibitory neurotransmission: signaling inhibits adenylate cyclase activity and activates a phosphatidylinositol-calcium second messenger system that regulates the release of Ca(2+) ions from intracellular stores. Beta-arrestin family members regulate signaling by mediating both receptor desensitization and resensitization processes. This Takifugu rubripes (Japanese pufferfish) protein is 5-hydroxytryptamine receptor 1A-beta (htr1a-B).